The following is a 158-amino-acid chain: MFNWNNRKVAKIITLIIFVAWLFVLILIAVVVLTKGNNLDILFGWMLPLPFAVLNSLSVLRLASFFASLKNVKKQKAVSFFAFFFTARYLIYLIPVIISFVVTPSIFNTIATIISTLFFPILNLVLSFVWLPLEYFFINLISKSKRKHVATGDSFKRN.

The next 4 helical transmembrane spans lie at 12–32 (IITLIIFVAWLFVLILIAVVV), 39–59 (LDILFGWMLPLPFAVLNSLSV), 90–110 (LIYLIPVIISFVVTPSIFNTI), and 113–133 (IISTLFFPILNLVLSFVWLPL).

Its subcellular location is the cell membrane. This is an uncharacterized protein from Mycoplasma genitalium (strain ATCC 33530 / DSM 19775 / NCTC 10195 / G37) (Mycoplasmoides genitalium).